Consider the following 36-residue polypeptide: Peruvianin-1 (36 aa).

It belongs to the germin family. As to quaternary structure, homohexamer, possibly consisting of a trimer of dimers. Post-translationally, glycosylated.

Its activity is regulated as follows. Inhibited by iodoacetamide and trans-epoxysuccinyl-L-leucylamido(4-guanidino)butane (E-64) but not by phenylmethylsulfonyl fluoride (PMSF), pepstatin-A, ethylenediamine tetra acetic acid (EDTA) or ethylene glycol tetraacetic acid (EGTA). Cysteine protease able to degrade azocasein and benzoyl-arginine-beta-naphtylamide (BANA) in vitro. The sequence is that of Peruvianin-1 from Thevetia peruviana (Yellow oleander).